A 291-amino-acid polypeptide reads, in one-letter code: 4-hydroxy-tetrahydrodipicolinate synthase (291 aa).

Thr-47 provides a ligand contact to pyruvate. Catalysis depends on Tyr-136, which acts as the Proton donor/acceptor. Lys-164 functions as the Schiff-base intermediate with substrate in the catalytic mechanism. Ile-206 contributes to the pyruvate binding site.

This sequence belongs to the DapA family. As to quaternary structure, homotetramer; dimer of dimers.

Its subcellular location is the cytoplasm. The catalysed reaction is L-aspartate 4-semialdehyde + pyruvate = (2S,4S)-4-hydroxy-2,3,4,5-tetrahydrodipicolinate + H2O + H(+). It functions in the pathway amino-acid biosynthesis; L-lysine biosynthesis via DAP pathway; (S)-tetrahydrodipicolinate from L-aspartate: step 3/4. Its function is as follows. Catalyzes the condensation of (S)-aspartate-beta-semialdehyde [(S)-ASA] and pyruvate to 4-hydroxy-tetrahydrodipicolinate (HTPA). The polypeptide is 4-hydroxy-tetrahydrodipicolinate synthase (Leuconostoc citreum (strain KM20)).